A 283-amino-acid chain; its full sequence is V-set domain containing T-cell activation inhibitor 1 (283 aa).

The N-terminal stretch at 1-24 (MASLGQIIFWSIINIIIILAGAIA) is a signal peptide. 2 Ig-like V-type domains span residues 35 to 144 (HFIT…ANLE) and 153 to 241 (PEIN…IKVT). 2 disulfide bridges follow: cysteine 56–cysteine 130 and cysteine 168–cysteine 225. The N-linked (GlcNAc...) asparagine glycan is linked to asparagine 216. Residue glycine 257 is the site of GPI-anchor amidated glycine attachment. Positions 258–283 (PSPCVFSSAFVAGWALLSLSCCLMLR) are cleaved as a propeptide — removed in mature form.

This sequence belongs to the immunoglobulin superfamily. BTN/MOG family. In terms of processing, N-glycosylated. As to expression, expressed on the surface of professional antigen-presenting cells (at protein level). Widely expressed, including in kidney, liver, lung, pancreas, placenta, prostate, spleen, testis and thymus.

The protein resides in the cell membrane. Functionally, negatively regulates T-cell-mediated immune response by inhibiting T-cell activation, proliferation, cytokine production and development of cytotoxicity. When expressed on the cell surface of tumor macrophages, plays an important role, together with regulatory T-cells (Treg), in the suppression of tumor-associated antigen-specific T-cell immunity. Involved in promoting epithelial cell transformation. In Mus musculus (Mouse), this protein is V-set domain containing T-cell activation inhibitor 1.